We begin with the raw amino-acid sequence, 874 residues long: Alanine--tRNA ligase (874 aa).

Histidine 563, histidine 567, cysteine 665, and histidine 669 together coordinate Zn(2+).

The protein belongs to the class-II aminoacyl-tRNA synthetase family. Requires Zn(2+) as cofactor.

It localises to the cytoplasm. It catalyses the reaction tRNA(Ala) + L-alanine + ATP = L-alanyl-tRNA(Ala) + AMP + diphosphate. Its function is as follows. Catalyzes the attachment of alanine to tRNA(Ala) in a two-step reaction: alanine is first activated by ATP to form Ala-AMP and then transferred to the acceptor end of tRNA(Ala). Also edits incorrectly charged Ser-tRNA(Ala) and Gly-tRNA(Ala) via its editing domain. In Haemophilus influenzae (strain 86-028NP), this protein is Alanine--tRNA ligase.